The primary structure comprises 134 residues: ATP synthase epsilon chain, chloroplastic (134 aa).

This sequence belongs to the ATPase epsilon chain family. As to quaternary structure, F-type ATPases have 2 components, CF(1) - the catalytic core - and CF(0) - the membrane proton channel. CF(1) has five subunits: alpha(3), beta(3), gamma(1), delta(1), epsilon(1). CF(0) has three main subunits: a, b and c.

Its subcellular location is the plastid. The protein localises to the chloroplast thylakoid membrane. In terms of biological role, produces ATP from ADP in the presence of a proton gradient across the membrane. This Amborella trichopoda protein is ATP synthase epsilon chain, chloroplastic.